Reading from the N-terminus, the 217-residue chain is ATP phosphoribosyltransferase (217 aa).

This sequence belongs to the ATP phosphoribosyltransferase family. Short subfamily. As to quaternary structure, heteromultimer composed of HisG and HisZ subunits.

The protein localises to the cytoplasm. The catalysed reaction is 1-(5-phospho-beta-D-ribosyl)-ATP + diphosphate = 5-phospho-alpha-D-ribose 1-diphosphate + ATP. It functions in the pathway amino-acid biosynthesis; L-histidine biosynthesis; L-histidine from 5-phospho-alpha-D-ribose 1-diphosphate: step 1/9. In terms of biological role, catalyzes the condensation of ATP and 5-phosphoribose 1-diphosphate to form N'-(5'-phosphoribosyl)-ATP (PR-ATP). Has a crucial role in the pathway because the rate of histidine biosynthesis seems to be controlled primarily by regulation of HisG enzymatic activity. The polypeptide is ATP phosphoribosyltransferase (hisG) (Neisseria meningitidis serogroup A / serotype 4A (strain DSM 15465 / Z2491)).